Reading from the N-terminus, the 742-residue chain is Two pore calcium channel protein 1 (742 aa).

The disordered stretch occupies residues 1–44; that stretch reads MSEAQAPLITEEAAERGLASSGSRRLSDGGGGQGSRKYRRRSDA. At 1–82 the chain is on the cytoplasmic side; the sequence is MSEAQAPLIT…NDTRFGRAMS (82 aa). Residues 83-103 form a helical membrane-spanning segment; the sequence is FYFVYLRLDWLWSLNIFALIL. At 104–140 the chain is on the extracellular side; that stretch reads LNFLEKPLWCRKDALHACDQRDMYFLGQLPYFSKTES. The helical transmembrane segment at 141-161 threads the bilayer; it reads LIYEGLTLVILVMEILCPLSY. The Cytoplasmic segment spans residues 162 to 176; that stretch reads EGLNIFWRSTTNKLK. The chain crosses the membrane as a helical span at residues 177–197; the sequence is ILLLFILACDILVFAFSSQPF. Topologically, residues 198 to 204 are extracellular; sequence RLAPYIR. The helical; Voltage-sensor transmembrane segment at 205-226 threads the bilayer; sequence VVFLIMTIRELRMCAITLAGLI. The helical transmembrane segment at 227–247 threads the bilayer; sequence GTYLNVLALSLLFLLFASWLA. Topologically, residues 248–258 are extracellular; sequence YVTFEDTPQGK. The segment at residues 259 to 273 is an intramembrane region (pore-forming); that stretch reads TIFSSYGVTLYQMFV. The Extracellular portion of the chain corresponds to 274–296; the sequence is LFTTSNNPDVWVPAYKISRWYSL. Residues 297–317 traverse the membrane as a helical segment; sequence FFIVYVLLGVYFLTNLILAVI. The Cytoplasmic portion of the chain corresponds to 318-446; it reads YDSFKEQFAK…SFVRSRTFEY (129 aa). EF-hand domains lie at 335 to 370 and 376 to 411; these read IRKN…LNKY and TSRE…IAIK. The helical transmembrane segment at 447–467 threads the bilayer; that stretch reads IIVFVLLINLVAVIIETTLDI. Residues 468–480 are Extracellular-facing; sequence ENSSSQETWQEVE. Asn-469 is a glycosylation site (N-linked (GlcNAc...) asparagine). A helical membrane pass occupies residues 481–501; sequence FFLGWIYVAEMALKIFSLGFG. Residues 502 to 510 lie on the Cytoplasmic side of the membrane; sequence AYWMEGQNK. Residues 511–531 traverse the membrane as a helical segment; that stretch reads FDFVLTWTIFIGETLTFAFPS. The Extracellular portion of the chain corresponds to 532–540; it reads KLPFLSNGE. A helical; Voltage-sensor membrane pass occupies residues 541-558; that stretch reads WIRYLLLGRVLRLTRILL. Topologically, residues 559-582 are cytoplasmic; that stretch reads QVQRFRVFVATFFTLMSSLMPYLG. The chain crosses the membrane as a helical span at residues 583–603; it reads IVFCILCMYCSLGLQIFGGIV. The Extracellular segment spans residues 604–627; it reads YAGNPTLEETDLFSNDYLLFNFND. The segment at residues 628 to 642 is an intramembrane region (pore-forming); sequence YPSGMVTLFNLLVMG. Topologically, residues 643–663 are extracellular; the sequence is NWQVWMESYWQLTGSSWSLIY. Residues 664 to 684 form a helical membrane-spanning segment; the sequence is FVSFYLISILLLLNLIVAFVL. At 685–742 the chain is on the cytoplasmic side; the sequence is EAFFAEMELEKGEEVDIQSPTSGGIKKRRSMRVRSKGTMVDILLHHMLSNELDGSQNS.

Belongs to the calcium channel alpha-1 subunit (TC 1.A.1.11) family. Two pore calcium channel subfamily. In terms of assembly, homodimer.

Its subcellular location is the membrane. With respect to regulation, inhibited by Al(3+). Functionally, functions as a voltage-gated inward-rectifying Ca(2+) channel (VDCC) across the plasma membrane that mediates sucrose-induced Ca(2+) influx in autotrophically grown leaf cells. Acts as the major ROS-responsive Ca(2+) channel and is the possible target of Al-dependent inhibition. Plays a regulatory role in defense responses. In Hordeum vulgare (Barley), this protein is Two pore calcium channel protein 1 (TPC1).